Consider the following 236-residue polypeptide: Putative glutamine amidotransferase-like protein YvdE (236 aa).

Positions 17–236 (SPFWWNKVSY…IFEIFANGTI (220 aa)) constitute a Glutamine amidotransferase type-1 domain.

The chain is Putative glutamine amidotransferase-like protein YvdE (yvdE) from Lactococcus lactis subsp. lactis (strain IL1403) (Streptococcus lactis).